Here is a 725-residue protein sequence, read N- to C-terminus: Ribonuclease R (725 aa).

Residues 236-559 (RKDLRDKLII…QLHRLIKQMV (324 aa)) enclose the RNB domain. An S1 motif domain is found at 611–689 (GKSLKAQIVS…NLGKVDVVLE (79 aa)).

The protein belongs to the RNR ribonuclease family. RNase R subfamily.

The protein localises to the cytoplasm. It catalyses the reaction Exonucleolytic cleavage in the 3'- to 5'-direction to yield nucleoside 5'-phosphates.. Functionally, 3'-5' exoribonuclease that releases 5'-nucleoside monophosphates and is involved in maturation of structured RNAs. In Mycoplasmopsis pulmonis (strain UAB CTIP) (Mycoplasma pulmonis), this protein is Ribonuclease R.